Reading from the N-terminus, the 7705-residue chain is Copine family protein 2 (7705 aa).

Disordered stretches follow at residues 1–61 (MNDY…RHSE), 269–360 (KEGN…NNSQ), 372–408 (SERK…HQQP), 464–492 (GDRA…TSSV), 506–538 (STEP…TADG), 560–614 (DERA…QGPP), 1301–1358 (NRSE…DQQV), 4381–4427 (ELEP…RSES), and 6779–6800 (RDEH…GKFT). Positions 12 to 25 (SSQKSNNQKISNNS) are enriched in low complexity. The segment covering 269-282 (KEGNNPSCCRERGT) has biased composition (basic and acidic residues). The segment covering 302-313 (STSTKVAVTSAS) has biased composition (low complexity). Over residues 318–336 (IKDHKKQLKKEKEKKKKMD) the composition is skewed to basic residues. Basic and acidic residues predominate over residues 372-404 (SERKTAKQREQELLQRSERRSGGRTHSHEEYRR). Residues 522 to 532 (ASLSSVQQKQP) are compositionally biased toward polar residues. Positions 560 to 587 (DERAKDFLRGDRSSRLSPQSERKNERQI) are enriched in basic and acidic residues. The span at 588–597 (QIRQQSSGPT) shows a compositional bias: polar residues. Basic and acidic residues-rich tracts occupy residues 598–611 (NRRE…EKRQ) and 1301–1335 (NRSE…HTSE). Positions 4397–4409 (RQSRVYRSSSQVR) are enriched in low complexity. Composition is skewed to basic and acidic residues over residues 4411–4427 (PSEE…RSES) and 6779–6797 (RDEH…RDGG). One can recognise a VWFA domain in the interval 7475–7673 (NLIFGIDYTK…FHKVMFNAPN (199 aa)).

It belongs to the copine family. As to expression, expressed in body wall muscle.

This Caenorhabditis elegans protein is Copine family protein 2 (cpna-2).